Consider the following 476-residue polypeptide: tRNA(Ile)-lysidine synthase (476 aa).

30–35 (SGGPDS) is an ATP binding site.

The protein belongs to the tRNA(Ile)-lysidine synthase family.

The protein resides in the cytoplasm. It carries out the reaction cytidine(34) in tRNA(Ile2) + L-lysine + ATP = lysidine(34) in tRNA(Ile2) + AMP + diphosphate + H(+). In terms of biological role, ligates lysine onto the cytidine present at position 34 of the AUA codon-specific tRNA(Ile) that contains the anticodon CAU, in an ATP-dependent manner. Cytidine is converted to lysidine, thus changing the amino acid specificity of the tRNA from methionine to isoleucine. In Bacillus cereus (strain ATCC 10987 / NRS 248), this protein is tRNA(Ile)-lysidine synthase.